The primary structure comprises 599 residues: Adenine deaminase (599 aa).

The interval 1–31 (MARSNRRGGRGDPEDDPAWAPPGHRCAGERA) is disordered.

This sequence belongs to the metallo-dependent hydrolases superfamily. Adenine deaminase family. The cofactor is Mn(2+).

The catalysed reaction is adenine + H2O + H(+) = hypoxanthine + NH4(+). This is Adenine deaminase from Methanopyrus kandleri (strain AV19 / DSM 6324 / JCM 9639 / NBRC 100938).